We begin with the raw amino-acid sequence, 652 residues long: Pesticidal crystal protein Cry3Bb (652 aa).

The span at 1–12 (MNPNNRSEHDTI) shows a compositional bias: basic and acidic residues. Disordered stretches follow at residues 1 to 33 (MNPN…ADNP) and 433 to 465 (KNET…ETTD). Residues 14-33 (VTPNSELQTNHNQYPLADNP) are compositionally biased toward polar residues.

The protein belongs to the delta endotoxin family. Monomer.

Functionally, promotes colloidosmotic lysis by binding to the midgut epithelial cells of Coleoptera. Has moderate level of toxicity to southern corn rootworm. The chain is Pesticidal crystal protein Cry3Bb (cry3Bb) from Bacillus thuringiensis.